A 124-amino-acid chain; its full sequence is Probable glycine cleavage system H protein (124 aa).

The Lipoyl-binding domain maps to 23–104 (VATVGITDYA…PYKNWLVKIR (82 aa)). The residue at position 64 (Lys64) is an N6-lipoyllysine.

Belongs to the GcvH family. In terms of assembly, the glycine cleavage system is composed of four proteins: P, T, L and H. (R)-lipoate serves as cofactor.

Its function is as follows. The glycine cleavage system catalyzes the degradation of glycine. The H protein shuttles the methylamine group of glycine from the P protein to the T protein. This chain is Probable glycine cleavage system H protein, found in Picrophilus torridus (strain ATCC 700027 / DSM 9790 / JCM 10055 / NBRC 100828 / KAW 2/3).